The chain runs to 494 residues: 3-octaprenyl-4-hydroxybenzoate carboxy-lyase (494 aa).

N172 is a binding site for Mn(2+). Prenylated FMN contacts are provided by residues I175–R177, R189–L191, and R194–G195. E238 is a Mn(2+) binding site. D294 (proton donor) is an active-site residue.

This sequence belongs to the UbiD family. In terms of assembly, homohexamer. The cofactor is prenylated FMN. It depends on Mn(2+) as a cofactor.

The protein localises to the cell membrane. It catalyses the reaction a 4-hydroxy-3-(all-trans-polyprenyl)benzoate + H(+) = a 2-(all-trans-polyprenyl)phenol + CO2. It participates in cofactor biosynthesis; ubiquinone biosynthesis. Its function is as follows. Catalyzes the decarboxylation of 3-octaprenyl-4-hydroxy benzoate to 2-octaprenylphenol, an intermediate step in ubiquinone biosynthesis. The polypeptide is 3-octaprenyl-4-hydroxybenzoate carboxy-lyase (Herminiimonas arsenicoxydans).